A 214-amino-acid polypeptide reads, in one-letter code: MSGLFITFEGGEGAGKSTQIALLASHLRNHGFDPVITREPGGSPGAEAIRHVILSGNAETYGPAMEALLFAAARADHVDQLIRPTLAEGRIVLCDRFIDSSRAYQGVTGNLDATYMAAIERIAIDGAMPDLTLVLDICAERGLSRAGKRRGSDTADRFEKEDIAVHEARRQAFLEIARQEPARCKVIDADRSQEKIADEIRSVVDTILTEKGLL.

10–17 (GGEGAGKS) serves as a coordination point for ATP.

Belongs to the thymidylate kinase family.

The catalysed reaction is dTMP + ATP = dTDP + ADP. Its function is as follows. Phosphorylation of dTMP to form dTDP in both de novo and salvage pathways of dTTP synthesis. The sequence is that of Thymidylate kinase from Brucella abortus (strain S19).